A 316-amino-acid polypeptide reads, in one-letter code: Diacylglycerol kinase (316 aa).

The region spanning 1 to 132 (MRKRARIIYN…VDIGKMNNRY (132 aa)) is the DAGKc domain. ATP is bound by residues 10-14 (NPTSG), T41, 67-73 (GDGTLNE), and T94. Mg(2+) is bound by residues K213, D216, and Y218. E273 functions as the Proton acceptor in the catalytic mechanism.

Belongs to the diacylglycerol/lipid kinase family. Homodimer. Mg(2+) serves as cofactor.

The catalysed reaction is a 1,2-diacyl-sn-glycerol + ATP = a 1,2-diacyl-sn-glycero-3-phosphate + ADP + H(+). Its function is as follows. Catalyzes the phosphorylation of diacylglycerol (DAG) into phosphatidic acid. Is a key enzyme involved in the production of lipoteichoic acid by reintroducing DAG formed from the breakdown of membrane phospholipids into the phosphatidylglycerol biosynthetic pathway. The polypeptide is Diacylglycerol kinase (dagK) (Staphylococcus epidermidis (strain ATCC 35984 / DSM 28319 / BCRC 17069 / CCUG 31568 / BM 3577 / RP62A)).